The chain runs to 509 residues: Ribonuclease Y (509 aa).

A helical membrane pass occupies residues 5 to 25 (IIILLSVFCGIFFICFIICSS). Residues 199–259 (TTNIVKLPSD…IRREIATRTL (61 aa)) enclose the KH domain. Positions 325–418 (VLAHSIEVAK…VAIADSISAS (94 aa)) constitute an HD domain.

This sequence belongs to the RNase Y family.

The protein resides in the cell membrane. Its function is as follows. Endoribonuclease that initiates mRNA decay. In Mycoplasma mycoides subsp. mycoides SC (strain CCUG 32753 / NCTC 10114 / PG1), this protein is Ribonuclease Y.